Consider the following 333-residue polypeptide: UPF0284 protein TGAM_0534 (333 aa).

Belongs to the UPF0284 family.

This chain is UPF0284 protein TGAM_0534, found in Thermococcus gammatolerans (strain DSM 15229 / JCM 11827 / EJ3).